Consider the following 312-residue polypeptide: 26S proteasome non-ATPase regulatory subunit 14 (312 aa).

The 136-residue stretch at 33 to 168 (VYISSLALLK…IDAFRTINPQ (136 aa)) folds into the MPN domain. The Zn(2+) site is built by H115, H117, and D128. Positions 115 to 128 (HSHPGFGCWLSGVD) match the JAMM motif motif.

The protein belongs to the peptidase M67A family. PSMD14 subfamily. As to quaternary structure, component of the 19S regulatory cap of the 26S proteasome.

In terms of biological role, metalloprotease component of the 26S proteasome that specifically cleaves 'Lys-63'-linked polyubiquitin chains. The 26S proteasome is involved in the ATP-dependent degradation of ubiquitinated proteins. The function of the 'Lys-63'-specific deubiquitination of the proteasome is unclear. The protein is 26S proteasome non-ATPase regulatory subunit 14 (rpn-11) of Caenorhabditis elegans.